A 223-amino-acid chain; its full sequence is Large ribosomal subunit protein uL4 (223 aa).

The segment at 49–106 (AAARQGTHSTKTRGEVSGGGRKPYRQKGTGRARQGSTRAPQFTGGGVVHGPKPRDYSQ) is disordered.

It belongs to the universal ribosomal protein uL4 family. In terms of assembly, part of the 50S ribosomal subunit.

Its function is as follows. One of the primary rRNA binding proteins, this protein initially binds near the 5'-end of the 23S rRNA. It is important during the early stages of 50S assembly. It makes multiple contacts with different domains of the 23S rRNA in the assembled 50S subunit and ribosome. Functionally, forms part of the polypeptide exit tunnel. The protein is Large ribosomal subunit protein uL4 of Mycobacterium bovis (strain ATCC BAA-935 / AF2122/97).